We begin with the raw amino-acid sequence, 813 residues long: Sodium/hydrogen exchanger 2 (813 aa).

7 consecutive transmembrane segments (helical) span residues 108–128, 139–159, 170–190, 210–230, 238–258, 279–299, and 309–329; these read IVPE…IIFG, TDVF…YFMP, IFWY…LSLF, LFGS…FENI, ILVF…YNLF, FFVV…IAAF, and VIEP…AEMF. Residue asparagine 351 is glycosylated (N-linked (GlcNAc...) asparagine). The next 4 membrane-spanning stretches (helical) occupy residues 362–382, 393–413, 431–451, and 460–480; these read YFMK…MGVS, AFVC…VFVL, FIIA…FLLP, and LFIT…GITI. Over residues 649 to 661 the composition is skewed to basic and acidic residues; it reads LRKDNSLNRERRA. 2 disordered regions span residues 649-709 and 736-813; these read LRKD…NLQP and DVGS…NEKP. The span at 687-696 shows a compositional bias: polar residues; sequence VSNADGNSSD. 2 stretches are compositionally biased toward basic and acidic residues: residues 770–781 and 797–813; these read KDQRFGRGREDS and RASE…NEKP.

It belongs to the monovalent cation:proton antiporter 1 (CPA1) transporter (TC 2.A.36) family. As to quaternary structure, interacts with CHP1 and CHP2. In terms of tissue distribution, predominantly in small intestine, colon, and stomach, with much lower levels in skeletal muscle, kidney, brain, testis, uterus, heart and lung.

The protein resides in the apical cell membrane. The enzyme catalyses Na(+)(in) + H(+)(out) = Na(+)(out) + H(+)(in). Li(+) activates Na(+)/H(+) exchanger. Plasma membrane Na(+)/H(+) antiporter. Mediates the electroneutral exchange of intracellular H(+) ions for extracellular Na(+). Major apical Na(+)/H(+) exchanger in the base of the colonic crypt. Controls in the colonic crypt intracellular pH (pHi) to direct colonic epithelial cell differentiation into the absorptive enterocyte lineage at the expense of the secretory lineage. The sequence is that of Sodium/hydrogen exchanger 2 (Slc9a2) from Rattus norvegicus (Rat).